A 79-amino-acid chain; its full sequence is Crassicorin-I (79 aa).

Positions 1–19 (MKLFLVSIVLVGMLVLAAA) are cleaved as a signal peptide. The propeptide occupies 20-39 (RPERDIDSFDEQEEKGFVKR). Cystine bridges form between C43–C76, C45–C69, and C59–C77.

This sequence belongs to the sea anemone type 3 (BDS) potassium channel toxin family. As to expression, highly expressed by the mesenteries. Moderately expressed by the pharynx. Weakly expressed by the gonad and pedal disk. No expression in tentacle.

The protein localises to the secreted. It is found in the nematocyst. In terms of biological role, peptide with both antimicrobial and neurotoxin activities. Cationic AMP with antibacterial activity against both Gram-positive bacteria (B.subtilis, MIC=11.49 ug/mL) and Gram-negative bacteria (E.coli (MIC=12.21 ug/mL) and S.enterica (MIC=11.95 ug/mL)). Shows no significant antimicrobial activity against bacteria S.aureus and P.aeruginosa, as well as the fungus C.albicans. In vivo, induces reversible paralytic activity towards the shrimp P.paucidens. May act by impairing sodium or potassium channels in the prey. The sequence is that of Crassicorin-I from Urticina crassicornis (Mottled anemone).